The chain runs to 354 residues: Guanine nucleotide-binding protein G(o) subunit alpha (354 aa).

Gly2 carries the N-myristoyl glycine lipid modification. The S-palmitoyl cysteine moiety is linked to residue Cys3. Residues 32-354 enclose the G-alpha domain; sequence KDIKLLLLGA…ANNLRGCGLY (323 aa). Positions 35–48 are G1 motif; that stretch reads KLLLLGAGESGKST. GTP-binding positions include 40 to 47, 176 to 182, 201 to 205, 270 to 273, and Ala326; these read GAGESGKS, LRTRVKT, DVGGQ, and NKKD. Mg(2+) contacts are provided by Ser47 and Thr182. The interval 174 to 182 is G2 motif; the sequence is DILRTRVKT. Residues 197 to 206 are G3 motif; it reads FKLFDVGGQR. A G4 motif region spans residues 266–273; that stretch reads ILFLNKKD. Positions 324-329 are G5 motif; that stretch reads TCATDT.

This sequence belongs to the G-alpha family. G(i/o/t/z) subfamily. In terms of assembly, g proteins are composed of 3 units; alpha, beta and gamma. The alpha chain contains the guanine nucleotide binding site.

Functionally, guanine nucleotide-binding proteins (G proteins) are involved as modulators or transducers in various transmembrane signaling systems. The G(o) protein function is not clear. The sequence is that of Guanine nucleotide-binding protein G(o) subunit alpha from Planorbella trivolvis (Marsh rams-horn).